A 2091-amino-acid polypeptide reads, in one-letter code: Protein Ycf2 (2091 aa).

The segment at 191-210 (DSSQLKGSSDQSRDPLDSIS) is disordered. 1432 to 1439 (GSIGTGRS) provides a ligand contact to ATP.

The protein belongs to the Ycf2 family.

Its subcellular location is the plastid. It is found in the chloroplast stroma. In terms of biological role, probable ATPase of unknown function. Its presence in a non-photosynthetic plant (Epifagus virginiana) and experiments in tobacco indicate that it has an essential function which is probably not related to photosynthesis. The sequence is that of Protein Ycf2 from Daucus carota (Wild carrot).